The primary structure comprises 597 residues: Dynein intermediate chain 3, ciliary (597 aa).

WD repeat units follow at residues E159–F210, K213–E253, S260–E301, E314–K354, E361–M400, Y404–T444, and V449–Q488. Disordered stretches follow at residues R512–A546 and A562–G597. The span at Q528 to L542 shows a compositional bias: acidic residues. The span at G584–G597 shows a compositional bias: basic and acidic residues.

It belongs to the dynein intermediate chain family. Consists of at least two heavy chains (alpha and beta), three intermediate chains and several light chains.

It localises to the cytoplasm. Its subcellular location is the cytoskeleton. The protein resides in the cilium axoneme. In terms of biological role, may play a role in the regulation of dynein heavy chain activity. This chain is Dynein intermediate chain 3, ciliary, found in Heliocidaris crassispina (Sea urchin).